Reading from the N-terminus, the 649-residue chain is MKFKWDEFFVTGDPLILGAQVSIALSTIAIIFVLTYFKKWKWLWSEWITTVDHKKLGIMYIISAVIMLFRGGVDGLMMRAQLALPNNSFLDSNHYNEIFTTHGTIMIIFMAMPFLIGLINVVVPLQIGARDVAFPYLNNLSFWTFFVGAMLFNISFVIGGSPNAGWTSYMPLASNDMSPGPGENYYLLGLQIAGIGTLMTGINFMVTILKMRTKGMTLMRMPMFTWTTLITMVIIVFAFPVLTVALALLSFDRLFGAHFFTLEAGGMPMLWANLFWIWGHPEVYIVILPAFGIFSEIISSFARKQLFGYTAMVGSIIAISVLSFLVWTHHFFTMGNSASVNSFFSITTMAISIPTGVKIFNWLFTMYKGRISFTTPMLWALAFIPNFVIGGVTGVMLAMAAADYQYHNTYFLVSHFHYVLIAGTVFACFAGFIFWYPKMFGHKLNERIGKWFFWIFMIGFNICFFPQYFLGLQGMPRRIYTYGPNDGWTTLNFISTVGAFMMGVGFLILCYNIYYSFRYSTREISGDSWGVGRSLDWATSSAIPPHYNFAVLPEVKSKDAFHHMKEEKTELYPESKFKKIHMPSNSGRPFFMSVAFGIAGFGLVFEWYWMGVVGLIGVLLCMVLRSFEYDNGYYISVDEIKETERKISE.

Residues 1 to 13 (MKFKWDEFFVTGD) lie on the Extracellular side of the membrane. Residues 14–34 (PLILGAQVSIALSTIAIIFVL) form a helical membrane-spanning segment. Over 35–55 (TYFKKWKWLWSEWITTVDHKK) the chain is Cytoplasmic. Residues 56 to 76 (LGIMYIISAVIMLFRGGVDGL) traverse the membrane as a helical segment. At 77 to 104 (MMRAQLALPNNSFLDSNHYNEIFTTHGT) the chain is on the extracellular side. H102 contacts Fe(II)-heme a. A helical membrane pass occupies residues 105–125 (IMIIFMAMPFLIGLINVVVPL). At 126 to 139 (QIGARDVAFPYLNN) the chain is on the cytoplasmic side. A helical membrane pass occupies residues 140 to 160 (LSFWTFFVGAMLFNISFVIGG). At 161–187 (SPNAGWTSYMPLASNDMSPGPGENYYL) the chain is on the extracellular side. The chain crosses the membrane as a helical span at residues 188–208 (LGLQIAGIGTLMTGINFMVTI). Topologically, residues 209–228 (LKMRTKGMTLMRMPMFTWTT) are cytoplasmic. A helical membrane pass occupies residues 229–249 (LITMVIIVFAFPVLTVALALL). Topologically, residues 250–273 (SFDRLFGAHFFTLEAGGMPMLWAN) are extracellular. A helical membrane pass occupies residues 274 to 294 (LFWIWGHPEVYIVILPAFGIF). Residues H280 and Y284 each contribute to the Cu cation site. Residues 280-284 (HPEVY) constitute a cross-link (1'-histidyl-3'-tyrosine (His-Tyr)). The Cytoplasmic segment spans residues 295 to 305 (SEIISSFARKQ). Residues 306 to 326 (LFGYTAMVGSIIAISVLSFLV) traverse the membrane as a helical segment. Residues 327 to 342 (WTHHFFTMGNSASVNS) are Extracellular-facing. Cu cation-binding residues include H329 and H330. Residues 343–363 (FFSITTMAISIPTGVKIFNWL) form a helical membrane-spanning segment. Residues 364 to 376 (FTMYKGRISFTTP) are Cytoplasmic-facing. The helical transmembrane segment at 377-397 (MLWALAFIPNFVIGGVTGVML) threads the bilayer. At 398–415 (AMAAADYQYHNTYFLVSH) the chain is on the extracellular side. Residue H415 coordinates heme a3. The chain crosses the membrane as a helical span at residues 416 to 436 (FHYVLIAGTVFACFAGFIFWY). Position 417 (H417) interacts with Fe(II)-heme a. Topologically, residues 437-451 (PKMFGHKLNERIGKW) are cytoplasmic. Residues 452–472 (FFWIFMIGFNICFFPQYFLGL) traverse the membrane as a helical segment. Topologically, residues 473 to 492 (QGMPRRIYTYGPNDGWTTLN) are extracellular. Residues 493 to 513 (FISTVGAFMMGVGFLILCYNI) traverse the membrane as a helical segment. Residues 514-585 (YYSFRYSTRE…KFKKIHMPSN (72 aa)) are Cytoplasmic-facing. Residues 586 to 603 (SGRPFFMSVAFGIAGFGL) traverse the membrane as a helical segment. Residues 604–606 (VFE) lie on the Extracellular side of the membrane. The helical transmembrane segment at 607–624 (WYWMGVVGLIGVLLCMVL) threads the bilayer. The Cytoplasmic segment spans residues 625-649 (RSFEYDNGYYISVDEIKETERKISE).

The protein belongs to the heme-copper respiratory oxidase family. The cofactor is Cu cation. Requires ferriheme a as cofactor. Heme A3. is required as a cofactor.

It localises to the cell membrane. The catalysed reaction is 2 a quinol + O2 = 2 a quinone + 2 H2O. It functions in the pathway energy metabolism; oxidative phosphorylation. Catalyzes quinol oxidation with the concomitant reduction of oxygen to water. Major component for energy conversion during vegetative growth. This is Quinol oxidase subunit 1 (qoxB) from Bacillus spizizenii (strain ATCC 23059 / NRRL B-14472 / W23) (Bacillus subtilis subsp. spizizenii).